The sequence spans 531 residues: Membrane protein insertase YidC (531 aa).

4 helical membrane passes run 5-25 (ALIA…LFSP), 343-363 (GNYG…FYPL), 415-435 (LPML…MFSI), and 489-509 (PVVF…YWLV).

It belongs to the OXA1/ALB3/YidC family. Type 1 subfamily. As to quaternary structure, interacts with the Sec translocase complex via SecD. Specifically interacts with transmembrane segments of nascent integral membrane proteins during membrane integration.

The protein resides in the cell inner membrane. Functionally, required for the insertion and/or proper folding and/or complex formation of integral membrane proteins into the membrane. Involved in integration of membrane proteins that insert both dependently and independently of the Sec translocase complex, as well as at least some lipoproteins. Aids folding of multispanning membrane proteins. This chain is Membrane protein insertase YidC, found in Geobacter sulfurreducens (strain ATCC 51573 / DSM 12127 / PCA).